The primary structure comprises 412 residues: MLGSTGSIGTQTLEIAEEFPERFRVVALTAGTNVSLVVEQIQRHHPEVVALADASLLPELKQQLNALPSEQQPPHLPQLLAGPEGLNVAASWDSADLVVSGIVGCAGLLPTLAAIKAGKDLALANKETLIAAAPVVLPELKRSGSRLLPADSEHSAIFQCLQGTPWAENARLSTGVPTPGLRHIQLTASGGAFRDWSAKDLEKATIADATSHPNWSMGRKITVDSATLMNKGLEVIEAHYLFGIDYNQIEIVIHPQSIIHSMIELADSSVLGQLGWPDMKLPILYCLSWPERLETPWRRLNLAEVGELTFRAPDTKKYPCMKLAYAAGRAGGTMPAVLNAANEEAVAQFLEERIHFLDIPEVIEAACERHKPDLQTQPQLDDVLAVDAWARKAVQEQVKRGTRRLPLPALTA.

Residues threonine 5, glycine 6, serine 7, isoleucine 8, glycine 31, asparagine 33, and asparagine 125 each contribute to the NADPH site. Lysine 126 contributes to the 1-deoxy-D-xylulose 5-phosphate binding site. Glutamate 127 is an NADPH binding site. Residue aspartate 151 coordinates Mn(2+). Serine 152, glutamate 153, serine 189, and histidine 212 together coordinate 1-deoxy-D-xylulose 5-phosphate. Glutamate 153 is a Mn(2+) binding site. Residue glycine 218 coordinates NADPH. Residues serine 225, asparagine 230, lysine 231, and glutamate 234 each contribute to the 1-deoxy-D-xylulose 5-phosphate site. Glutamate 234 is a Mn(2+) binding site.

Belongs to the DXR family. Mg(2+) serves as cofactor. The cofactor is Mn(2+).

The catalysed reaction is 2-C-methyl-D-erythritol 4-phosphate + NADP(+) = 1-deoxy-D-xylulose 5-phosphate + NADPH + H(+). It functions in the pathway isoprenoid biosynthesis; isopentenyl diphosphate biosynthesis via DXP pathway; isopentenyl diphosphate from 1-deoxy-D-xylulose 5-phosphate: step 1/6. Functionally, catalyzes the NADPH-dependent rearrangement and reduction of 1-deoxy-D-xylulose-5-phosphate (DXP) to 2-C-methyl-D-erythritol 4-phosphate (MEP). The polypeptide is 1-deoxy-D-xylulose 5-phosphate reductoisomerase (Prochlorococcus marinus (strain MIT 9313)).